Consider the following 250-residue polypeptide: 2,3-bisphosphoglycerate-dependent phosphoglycerate mutase (250 aa).

Substrate contacts are provided by residues R10–N17, T23–G24, R62, E89–Y92, K100, R116–R117, and G185–N186. Residue H11 is the Tele-phosphohistidine intermediate of the active site. E89 (proton donor/acceptor) is an active-site residue.

It belongs to the phosphoglycerate mutase family. BPG-dependent PGAM subfamily. Homodimer.

It carries out the reaction (2R)-2-phosphoglycerate = (2R)-3-phosphoglycerate. It functions in the pathway carbohydrate degradation; glycolysis; pyruvate from D-glyceraldehyde 3-phosphate: step 3/5. In terms of biological role, catalyzes the interconversion of 2-phosphoglycerate and 3-phosphoglycerate. In Salmonella choleraesuis (strain SC-B67), this protein is 2,3-bisphosphoglycerate-dependent phosphoglycerate mutase.